The following is a 267-amino-acid chain: Translation initiation factor 2 subunit alpha (267 aa).

Residues 12–83 (GEYVIATVKE…RRKTVDVSLK (72 aa)) form the S1 motif domain.

This sequence belongs to the eIF-2-alpha family. As to quaternary structure, heterotrimer composed of an alpha, a beta and a gamma chain.

Its function is as follows. eIF-2 functions in the early steps of protein synthesis by forming a ternary complex with GTP and initiator tRNA. This chain is Translation initiation factor 2 subunit alpha, found in Staphylothermus marinus (strain ATCC 43588 / DSM 3639 / JCM 9404 / F1).